Here is a 372-residue protein sequence, read N- to C-terminus: Glutamate 5-kinase (372 aa).

K14 is a binding site for ATP. 3 residues coordinate substrate: S54, D141, and N153. ATP contacts are provided by residues 173–174 (TD) and 215–221 (TGGMITK). The 79-residue stretch at 280 to 358 (AGRLLLDDGA…REIEAALGYI (79 aa)) folds into the PUA domain.

This sequence belongs to the glutamate 5-kinase family.

Its subcellular location is the cytoplasm. It catalyses the reaction L-glutamate + ATP = L-glutamyl 5-phosphate + ADP. It participates in amino-acid biosynthesis; L-proline biosynthesis; L-glutamate 5-semialdehyde from L-glutamate: step 1/2. Its function is as follows. Catalyzes the transfer of a phosphate group to glutamate to form L-glutamate 5-phosphate. This is Glutamate 5-kinase from Chromobacterium violaceum (strain ATCC 12472 / DSM 30191 / JCM 1249 / CCUG 213 / NBRC 12614 / NCIMB 9131 / NCTC 9757 / MK).